Here is a 312-residue protein sequence, read N- to C-terminus: Pyridoxal 5'-phosphate synthase subunit PDX1 (312 aa).

Asp43 is a D-ribose 5-phosphate binding site. Lys100 functions as the Schiff-base intermediate with D-ribose 5-phosphate in the catalytic mechanism. Gly172 serves as a coordination point for D-ribose 5-phosphate. Arg184 is a D-glyceraldehyde 3-phosphate binding site. Residues Gly233 and 254–255 (GS) each bind D-ribose 5-phosphate.

The protein belongs to the PdxS/SNZ family.

It carries out the reaction aldehydo-D-ribose 5-phosphate + D-glyceraldehyde 3-phosphate + L-glutamine = pyridoxal 5'-phosphate + L-glutamate + phosphate + 3 H2O + H(+). The protein operates within cofactor biosynthesis; pyridoxal 5'-phosphate biosynthesis. Its function is as follows. Catalyzes the formation of pyridoxal 5'-phosphate from ribose 5-phosphate (RBP), glyceraldehyde 3-phosphate (G3P) and ammonia. The ammonia is provided by PDX2. Can also use ribulose 5-phosphate and dihydroxyacetone phosphate as substrates, resulting from enzyme-catalyzed isomerization of RBP and G3P, respectively. Also plays an indirect role in resistance to singlet oxygen-generating photosensitizers. This Phaseolus vulgaris (Kidney bean) protein is Pyridoxal 5'-phosphate synthase subunit PDX1 (PDX1).